Reading from the N-terminus, the 93-residue chain is Cell division protein FtsB (93 aa).

Residues 1-3 (MRL) are Cytoplasmic-facing. Residues 4 to 21 (FILVLTLLFGWLQYTLWF) traverse the membrane as a helical segment. Over 22–93 (GKNGVSDYYT…FYRIVGEENQ (72 aa)) the chain is Periplasmic. Positions 42-75 (VNTKLQARNSEMYAEIDDLKQGLDAIEERARHEL) form a coiled coil.

Belongs to the FtsB family. In terms of assembly, part of a complex composed of FtsB, FtsL and FtsQ.

It is found in the cell inner membrane. Essential cell division protein. May link together the upstream cell division proteins, which are predominantly cytoplasmic, with the downstream cell division proteins, which are predominantly periplasmic. This chain is Cell division protein FtsB, found in Vibrio vulnificus (strain YJ016).